A 794-amino-acid polypeptide reads, in one-letter code: Protein argonaute-4 (794 aa).

Positions 152–271 (PIIEFMCEVL…LPLEVCNIVA (120 aa)) constitute a PAZ domain. The region spanning 442–753 (LIVVILPGKT…VAFRARYHLV (312 aa)) is the Piwi domain. Residues 758-779 (DSAEGSHVSGQSNGRDPQALAK) are disordered.

The protein belongs to the argonaute family. Ago subfamily.

The protein resides in the cytoplasm. It is found in the P-body. Required for RNA-mediated gene silencing (RNAi). Binds to short RNAs such as microRNAs (miRNAs) and represses the translation of mRNAs which are complementary to them. Lacks endonuclease activity and does not appear to cleave target mRNAs. This is Protein argonaute-4 (AGO4) from Gallus gallus (Chicken).